The sequence spans 613 residues: Probable hydrolase clz13 (613 aa).

Residues 1 to 25 (MCLLSMRFTVAILLVLLSHCGGSHA) form the signal peptide. 7 N-linked (GlcNAc...) asparagine glycosylation sites follow: Asn-61, Asn-89, Asn-286, Asn-422, Asn-456, Asn-477, and Asn-581.

The protein belongs to the beta-lactamase family.

It participates in secondary metabolite biosynthesis. Probable hydrolase; part of the gene cluster that mediates the biosynthesis of squalestatin S1 (SQS1, also known as zaragozic acid A), a heavily oxidized fungal polyketide that offers potent cholesterol lowering activity by targeting squalene synthase (SS). SQS1 is composed of a 2,8-dioxobicyclic[3.2.1]octane-3,4,5-tricarboxyclic acid core that is connected to two lipophilic polyketide arms. These initial steps feature the priming of an unusual benzoic acid starter unit onto the highly reducing polyketide synthase clz14, followed by oxaloacetate extension and product release to generate a tricarboxylic acid containing product. The phenylalanine ammonia lyase (PAL) clz10 and the acyl-CoA ligase clz12 are involved in transforming phenylalanine into benzoyl-CoA. The citrate synthase-like protein clz17 is involved in connecting the C-alpha-carbons of the hexaketide chain and oxaloacetate to afford the tricarboxylic acid unit. The potential hydrolytic enzymes, clz11 and clz13, are in close proximity to pks2 and may participate in product release. On the other side, the tetraketide arm is synthesized by a the squalestatin tetraketide synthase clz2 and enzymatically esterified to the core in the last biosynthetic step, by the acetyltransferase clz6. The biosynthesis of the tetraketide must involve 3 rounds of chain extension. After the first and second rounds methyl-transfer occurs, and in all rounds of extension the ketoreductase and dehydratase are active. The enoyl reductase and C-MeT of clz2 are not active in the final round of extension. The acetyltransferase clz6 appears to have a broad substrate selectivity for its acyl CoA substrate, allowing the in vitro synthesis of novel squalestatins. The biosynthesis of SQS1 requires several oxidative steps likely performed by oxidoreductases clz3, clz15 and clz16. Finally, in support of the identification of the cluster as being responsible for SQS1 production, the cluster contains a gene encoding a putative squalene synthase (SS) clz20, suggesting a likely mechanism for self-resistance. This is Probable hydrolase clz13 from Cochliobolus lunatus (Filamentous fungus).